A 953-amino-acid chain; its full sequence is Nucleotide-binding oligomerization domain-containing protein 1 (953 aa).

In terms of domain architecture, CARD spans 15–105; it reads ESHPHIQLLK…AYVDLRPWLL (91 aa). The 336-residue stretch at 196 to 531 folds into the NACHT domain; sequence ETIFILGDAG…AFFTAFFLVL (336 aa). Residue 202-209 coordinates ATP; that stretch reads GDAGVGKS. S-palmitoyl cysteine attachment occurs at residues Cys558 and Cys567. LRR repeat units follow at residues 632-656, 702-725, 727-750, 755-778, 783-806, 839-862, 867-891, 895-918, and 923-946; these read LKSL…IWML, FPKR…ELQP, FSRL…VLSE, YKIV…YVTK, CKGL…YLAL, HPSL…SLAR, NTSL…LAEM, NQTL…QLAD, and NTGI…VYED. Cys952 carries the S-palmitoyl cysteine lipid modification.

The protein belongs to the NOD1-NOD2 family. As to quaternary structure, homooligomer: homooligomerizes following ligand-binding, promoting RIPK2 recruitment. Interacts (via CARD domain) with RIPK2 (via CARD domain). Following RIPK2 recruitment, RIPK2 homooligomerizes via its CARD domain and forms long filaments named RIPosomes. Interacts with ARHGEF2. Interacts (via CARD domain) with ubiquitin; inhibiting interaction with RIPK2. Interacts with NLRP10 and recruits it to the cell membrane following invasive bacterial infection. Interacts with IFIH1; this interaction promotes transcription of antiviral genes and inhibition of viral replication. Interacts with IRGM; promoting NOD1 degradation. Interacts with ATG16L1. Post-translationally, palmitoylated. Palmitoylation is required for proper recruitment to the bacterial entry site and hence for proper signaling upon cognate peptidoglycan detection. Ubiquitinated. 'Lys-48'-linked polyubiquitination by RNF34 promotes proteasomal degradation and thereby negatively regulates NOD1 for instance in NF-kappa-B activation. In terms of processing, degraded via selective autophagy following interaction with IRGM. IRGM promotes NOD1-RIPK2 RIPosome recruitment to autophagosome membranes, promoting their SQSTM1/p62-dependent autophagic degradation. In terms of tissue distribution, highly expressed in adult heart, skeletal muscle, pancreas, spleen and ovary. Also detected in placenta, lung, liver, kidney, thymus, testis, small intestine and colon.

It localises to the cell membrane. The protein localises to the apical cell membrane. It is found in the basolateral cell membrane. The protein resides in the cytoplasm. Its function is as follows. Pattern recognition receptor (PRR) that detects bacterial peptidoglycan fragments and other danger signals and thus participates in both innate and adaptive immune responses. Specifically recognizes and binds gamma-D-glutamyl-meso-diaminopimelic acid (iE-DAP), a dipeptide present in peptidoglycan of Gram-negative bacteria. Preferentially binds iE-DAP in tripeptide-containing muropeptides (MurNAc-TriDAP or TriDAP). Ligand binding triggers oligomerization that facilitates the binding and subsequent activation of the proximal adapter receptor-interacting RIPK2. Following recruitment, RIPK2 undergoes 'Met-1'- (linear) and 'Lys-63'-linked polyubiquitination by E3 ubiquitin-protein ligases XIAP, BIRC2, BIRC3 and the LUBAC complex, becoming a scaffolding protein for downstream effectors, triggering activation of the NF-kappa-B and MAP kinases signaling. This in turn leads to the transcriptional activation of hundreds of genes involved in immune response. Also acts as a regulator of antiviral response elicited by dsRNA and the expression of RLR pathway members by targeting IFIH1 and TRAF3 to modulate the formation of IFIH1-MAVS and TRAF3-MAVS complexes leading to increased transcription of type I IFNs. Also acts as a regulator of autophagy via its interaction with ATG16L1, possibly by recruiting ATG16L1 at the site of bacterial entry. Besides recognizing pathogens, also involved in the endoplasmic reticulum stress response: acts by sensing and binding to the cytosolic metabolite sphingosine-1-phosphate generated in response to endoplasmic reticulum stress, initiating an inflammation process that leads to activation of the NF-kappa-B and MAP kinases signaling. In addition, plays a role in insulin trafficking in beta cells in a cell-autonomous manner. Mechanistically, upon recognizing cognate ligands, NOD1 and RIPK2 localize to insulin vesicles where they recruit RAB1A to direct insulin trafficking through the cytoplasm. In contrast to isoform 1, does not efficiently recognize and bind gamma-D-glutamyl-meso-diaminopimelic acid (iE-DAP) ligand. The protein is Nucleotide-binding oligomerization domain-containing protein 1 of Homo sapiens (Human).